A 432-amino-acid polypeptide reads, in one-letter code: RING finger protein 44 (432 aa).

Residues 1–86 (MRPWALAVTR…GGSPRMLHPA (86 aa)) are disordered. Over residues 56–65 (QQPPSRPPHL) the composition is skewed to pro residues. An RING-type; atypical zinc finger spans residues 380–421 (CVVCFSDFEARQLLRVLPCNHEFHTKCVDKWLKANRTCPICR).

This Homo sapiens (Human) protein is RING finger protein 44 (RNF44).